The sequence spans 234 residues: Ion-translocating oxidoreductase complex subunit E (234 aa).

Transmembrane regions (helical) follow at residues Leu62 to Phe82, Ile92 to Ala112, Thr116 to Gly136, Ile151 to Leu171, and Ser205 to Ile225.

It belongs to the NqrDE/RnfAE family. As to quaternary structure, the complex is composed of six subunits: RnfA, RnfB, RnfC, RnfD, RnfE and RnfG.

It is found in the cell inner membrane. Its function is as follows. Part of a membrane-bound complex that couples electron transfer with translocation of ions across the membrane. This is Ion-translocating oxidoreductase complex subunit E from Haemophilus influenzae (strain PittGG).